We begin with the raw amino-acid sequence, 473 residues long: Glutamate--tRNA ligase (473 aa).

The short motif at 11-21 (PSPTGFLHIGG) is the 'HIGH' region element. The 'KMSKS' region signature appears at 240–244 (KLSKR). An ATP-binding site is contributed by Lys-243.

Belongs to the class-I aminoacyl-tRNA synthetase family. Glutamate--tRNA ligase type 1 subfamily. As to quaternary structure, monomer.

The protein resides in the cytoplasm. It carries out the reaction tRNA(Glu) + L-glutamate + ATP = L-glutamyl-tRNA(Glu) + AMP + diphosphate. Catalyzes the attachment of glutamate to tRNA(Glu) in a two-step reaction: glutamate is first activated by ATP to form Glu-AMP and then transferred to the acceptor end of tRNA(Glu). This Rhodopseudomonas palustris (strain TIE-1) protein is Glutamate--tRNA ligase.